The primary structure comprises 343 residues: GTPase Obg (343 aa).

In terms of domain architecture, Obg spans 1–158 (MFIDEAKIRV…FTLRLELKVL (158 aa)). Residues 121–140 (RGGRGNQHFATSTHQAPREH) form a disordered region. One can recognise an OBG-type G domain in the interval 159-333 (ADIGIVGYPN…LKYAMAERVR (175 aa)). GTP contacts are provided by residues 165-172 (GYPNVGKS), 190-194 (FTTLE), 215-218 (DIPG), 286-289 (SKID), and 314-316 (SAV). 2 residues coordinate Mg(2+): serine 172 and threonine 192.

This sequence belongs to the TRAFAC class OBG-HflX-like GTPase superfamily. OBG GTPase family. As to quaternary structure, monomer. Mg(2+) is required as a cofactor.

The protein resides in the cytoplasm. Its function is as follows. An essential GTPase which binds GTP, GDP and possibly (p)ppGpp with moderate affinity, with high nucleotide exchange rates and a fairly low GTP hydrolysis rate. Plays a role in control of the cell cycle, stress response, ribosome biogenesis and in those bacteria that undergo differentiation, in morphogenesis control. The protein is GTPase Obg of Acidobacterium capsulatum (strain ATCC 51196 / DSM 11244 / BCRC 80197 / JCM 7670 / NBRC 15755 / NCIMB 13165 / 161).